We begin with the raw amino-acid sequence, 295 residues long: MHLDRSDSNGGSSRYTLDHEPPVVPIDLKTFRREIRKFHGKEITDIADNPQEYSDFVSAKARRTADVAQQYGIRRDSENARYFSYQLGNQCVGLMRTEGGFSMEEEFESKSWRDQFPGHQEITSTVDLQVAHPLVENAGDILLEAPTSEGRRTTVAELARGKPRGESRAAMMGFVEVDDCDMVLDPKQHPDKWTQTSAAEWRRKDKPPLYLRKFEDAETAQCSTKAALTRLTKMTSCDRILARFGRDGRAPSAKTGPHVMDRERKSVTNCHALTAIPIRCLGAKELERRVSLRPS.

The segment at 1–20 (MHLDRSDSNGGSSRYTLDHE) is disordered.

The protein belongs to the NopP family.

The protein is Host-inducible protein A of Rhizobium fredii (Sinorhizobium fredii).